Reading from the N-terminus, the 95-residue chain is Late cornified envelope protein 3B (95 aa).

Residues 1–13 show a composition bias toward low complexity; sequence MSCQQNQQQCQPL. Disordered stretches follow at residues 1-29 and 68-95; these read MSCQ…SAQC and RQSS…GGCC.

It belongs to the LCE family. As to expression, skin-specific. Expression was readily detected in adult trunk skin, adult arm skin, fetal skin, penal skin, vulva, esophagus and tongue. Not expressed in the cervix, rectum, lung, colon, or placenta.

A structural component of the cornified envelope of the stratum corneum involved in innate cutaneous host defense. Possesses defensin-like antimicrobial activity against a broad spectrum of Gram-positive and Gram-negative bacteria, both aerobic and anaerobic species. Upon inflammation, may regulate skin barrier repair by shaping cutaneous microbiota composition and immune response to bacterial antigens. The protein is Late cornified envelope protein 3B of Homo sapiens (Human).